The sequence spans 701 residues: Mediator of RNA polymerase II transcription subunit 25 (701 aa).

Disordered stretches follow at residues 277–388 and 580–617; these read AAQK…GAQQ and AAAT…NPGA. The segment covering 286 to 306 has biased composition (polar residues); that stretch reads ANQQQKNRFGQISTPPFSQSP. Low complexity-rich tracts occupy residues 314 to 367 and 593 to 604; these read PSLS…NNQQ and APPNQVQGQAQA. Residues 621–625 carry the LXXLL motif motif; it reads LRSLL. The tract at residues 650–689 is disordered; sequence APGGGAQMQPQWRQPHQGPLMVPTGPRGPVTQNPGMPSVS. Over residues 679 to 689 the composition is skewed to polar residues; sequence VTQNPGMPSVS.

The protein belongs to the Mediator complex subunit 25 family. Component of the Mediator complex.

Its subcellular location is the nucleus. Functionally, component of the Mediator complex, a coactivator involved in the regulated transcription of nearly all RNA polymerase II-dependent genes. Mediator functions as a bridge to convey information from gene-specific regulatory proteins to the basal RNA polymerase II transcription machinery. Mediator is recruited to promoters by direct interactions with regulatory proteins and serves as a scaffold for the assembly of a functional preinitiation complex with RNA polymerase II and the general transcription factors. The polypeptide is Mediator of RNA polymerase II transcription subunit 25 (med25) (Danio rerio (Zebrafish)).